We begin with the raw amino-acid sequence, 618 residues long: Polyamine transporter TPO5 (618 aa).

The Cytoplasmic segment spans residues 1-60 (MPEYTLLADNIRENIVHFDPNGLFDNLHTIVHEDDSQENEEAEHFNYDQVLDKSLLSRGS). Residues 61 to 84 (IVGLGLGLMSPVLGMCTSMAIGLI) traverse the membrane as a helical segment. Residues 85-90 (NGGPLT) are Extracellular-facing. Residues 91–110 (IMLGFLISGVCIWFSSLSLG) form a helical membrane-spanning segment. At 111 to 131 (EIVSKFPMELHVGSAMLAPEK) the chain is on the cytoplasmic side. Residues 132 to 148 (LKLVCSWYTGWLMLIGN) form a helical membrane-spanning segment. The Extracellular portion of the chain corresponds to 149–154 (WTMSTS). A helical transmembrane segment spans residues 155-171 (ITFAGAQLTISLILMTN). Residues 172-179 (SNLISEAH) lie on the Cytoplasmic side of the membrane. Residues 180–200 (LIFYTVIVFYLVVTVVGLVNL) form a helical membrane-spanning segment. Topologically, residues 201 to 211 (KFARFIETINK) are extracellular. Residues 212-231 (VCVYWIIYAIIFIDILLLVF) traverse the membrane as a helical segment. Residues 232–297 (HKGKFRSLKY…EKDIPRGMSN (66 aa)) are Cytoplasmic-facing. The helical transmembrane segment at 298 to 317 (AVLLSAFSGVIFLIPIMLIL) threads the bilayer. Over 318-342 (PDNDLLFTNHKVLPIVNIFTKSTDS) the chain is Extracellular. The helical transmembrane segment at 343-367 (VVLSFFLVLLILGNLLFSGIGSITT) threads the bilayer. Over 368–402 (SSRAVYSFSRDQAIPYYDKWTYVEPDSQSKVPKNS) the chain is Cytoplasmic. A helical transmembrane segment spans residues 403-419 (VVLSMIISYFLGLLALI). The Extracellular portion of the chain corresponds to 420–425 (STAAFN). A helical transmembrane segment spans residues 426-449 (AFIGAAVLCLCSATFIPLVLVLFT). The Cytoplasmic segment spans residues 450-464 (RRRAIRSAPVKIRYK). The helical transmembrane segment at 465–486 (FGWFINIVSIVWLLLSMVSVCL) threads the bilayer. The Extracellular portion of the chain corresponds to 487-498 (PTQVPVTFKTMN). The helical transmembrane segment at 499–516 (YALMVYVFCILVITGLYF) threads the bilayer. The Cytoplasmic portion of the chain corresponds to 517 to 618 (KWGKYNFRLP…DLADDRRYDI (102 aa)). Ser-569 bears the Phosphoserine mark. The segment at 576–618 (VHPKSSTENPFEENEENVITDYGDEHHTAEQEFDLADDRRYDI) is disordered. Residues 598–618 (GDEHHTAEQEFDLADDRRYDI) show a composition bias toward basic and acidic residues.

Belongs to the amino acid-polyamine-organocation (APC) superfamily.

The protein localises to the golgi apparatus membrane. Functionally, required for polyamine transport. Transports putrescine effectively and spermidine less effectively. In Saccharomyces cerevisiae (strain ATCC 204508 / S288c) (Baker's yeast), this protein is Polyamine transporter TPO5 (TPO5).